We begin with the raw amino-acid sequence, 131 residues long: Small ribosomal subunit protein uS8 (131 aa).

Belongs to the universal ribosomal protein uS8 family. As to quaternary structure, part of the 30S ribosomal subunit. Contacts proteins S5 and S12.

In terms of biological role, one of the primary rRNA binding proteins, it binds directly to 16S rRNA central domain where it helps coordinate assembly of the platform of the 30S subunit. The chain is Small ribosomal subunit protein uS8 from Azobacteroides pseudotrichonymphae genomovar. CFP2.